The chain runs to 741 residues: Phosphoribosylformylglycinamidine synthase subunit PurL (741 aa).

His53 is a catalytic residue. 2 residues coordinate ATP: Tyr56 and Lys95. Glu97 serves as a coordination point for Mg(2+). Substrate-binding positions include 98–101 and Arg120; that span reads SHNH. His99 serves as the catalytic Proton acceptor. Asp121 lines the Mg(2+) pocket. Residue Gln244 participates in substrate binding. Asp274 serves as a coordination point for Mg(2+). Position 318–320 (318–320) interacts with substrate; sequence ESQ. The ATP site is built by Asp501 and Gly538. Mg(2+) is bound at residue Asn539. Ser541 contributes to the substrate binding site.

It belongs to the FGAMS family. In terms of assembly, monomer. Part of the FGAM synthase complex composed of 1 PurL, 1 PurQ and 2 PurS subunits.

It localises to the cytoplasm. It carries out the reaction N(2)-formyl-N(1)-(5-phospho-beta-D-ribosyl)glycinamide + L-glutamine + ATP + H2O = 2-formamido-N(1)-(5-O-phospho-beta-D-ribosyl)acetamidine + L-glutamate + ADP + phosphate + H(+). It functions in the pathway purine metabolism; IMP biosynthesis via de novo pathway; 5-amino-1-(5-phospho-D-ribosyl)imidazole from N(2)-formyl-N(1)-(5-phospho-D-ribosyl)glycinamide: step 1/2. Its function is as follows. Part of the phosphoribosylformylglycinamidine synthase complex involved in the purines biosynthetic pathway. Catalyzes the ATP-dependent conversion of formylglycinamide ribonucleotide (FGAR) and glutamine to yield formylglycinamidine ribonucleotide (FGAM) and glutamate. The FGAM synthase complex is composed of three subunits. PurQ produces an ammonia molecule by converting glutamine to glutamate. PurL transfers the ammonia molecule to FGAR to form FGAM in an ATP-dependent manner. PurS interacts with PurQ and PurL and is thought to assist in the transfer of the ammonia molecule from PurQ to PurL. The chain is Phosphoribosylformylglycinamidine synthase subunit PurL from Latilactobacillus sakei subsp. sakei (strain 23K) (Lactobacillus sakei subsp. sakei).